The sequence spans 48 residues: Large ribosomal subunit protein bL32 (48 aa).

Basic residues predominate over residues 1–20 (MAVPKRRVSKTRAAKRRTHY). The interval 1–48 (MAVPKRRVSKTRAAKRRTHYKVSLPMPIKDKDGSYKMPHRANPTTKEY) is disordered.

Belongs to the bacterial ribosomal protein bL32 family.

In Campylobacter jejuni subsp. jejuni serotype O:2 (strain ATCC 700819 / NCTC 11168), this protein is Large ribosomal subunit protein bL32 (rpmF).